Here is a 525-residue protein sequence, read N- to C-terminus: GMP synthase [glutamine-hydrolyzing] (525 aa).

A Glutamine amidotransferase type-1 domain is found at 9-207; that stretch reads RILILDFGSQ…VRDICQCEAL (199 aa). The active-site Nucleophile is the Cys-86. Residues His-181 and Glu-183 contribute to the active site. A GMPS ATP-PPase domain is found at 208–400; the sequence is WTPAKIIDDA…LGLPYDMLYR (193 aa). An ATP-binding site is contributed by 235-241; it reads SGGVDSS.

As to quaternary structure, homodimer.

The enzyme catalyses XMP + L-glutamine + ATP + H2O = GMP + L-glutamate + AMP + diphosphate + 2 H(+). Its pathway is purine metabolism; GMP biosynthesis; GMP from XMP (L-Gln route): step 1/1. In terms of biological role, catalyzes the synthesis of GMP from XMP. The chain is GMP synthase [glutamine-hydrolyzing] from Escherichia coli O8 (strain IAI1).